The primary structure comprises 60 residues: Large ribosomal subunit protein uL30 (60 aa).

It belongs to the universal ribosomal protein uL30 family. As to quaternary structure, part of the 50S ribosomal subunit.

This chain is Large ribosomal subunit protein uL30, found in Streptococcus gordonii (strain Challis / ATCC 35105 / BCRC 15272 / CH1 / DL1 / V288).